The following is a 229-amino-acid chain: Putative N-acetylmannosamine-6-phosphate 2-epimerase (229 aa).

This sequence belongs to the NanE family.

It catalyses the reaction an N-acyl-D-glucosamine 6-phosphate = an N-acyl-D-mannosamine 6-phosphate. The protein operates within amino-sugar metabolism; N-acetylneuraminate degradation; D-fructose 6-phosphate from N-acetylneuraminate: step 3/5. In terms of biological role, converts N-acetylmannosamine-6-phosphate (ManNAc-6-P) to N-acetylglucosamine-6-phosphate (GlcNAc-6-P). This is Putative N-acetylmannosamine-6-phosphate 2-epimerase from Salmonella arizonae (strain ATCC BAA-731 / CDC346-86 / RSK2980).